The primary structure comprises 322 residues: Phosphate acetyltransferase (322 aa).

The protein belongs to the phosphate acetyltransferase and butyryltransferase family.

The protein localises to the cytoplasm. It catalyses the reaction acetyl-CoA + phosphate = acetyl phosphate + CoA. It participates in metabolic intermediate biosynthesis; acetyl-CoA biosynthesis; acetyl-CoA from acetate: step 2/2. The chain is Phosphate acetyltransferase (pta) from Mycoplasma capricolum subsp. capricolum (strain California kid / ATCC 27343 / NCTC 10154).